Consider the following 479-residue polypeptide: BURP domain-containing protein 4 (479 aa).

Residues 1-46 (MVGKGNECAAARRRFSLRAAAASSSSSSFLPCLLLAAALSAGCCRA) form the signal peptide. The interval 158 to 177 (RADGPPKQPATFPASPNGEK) is disordered. The BURP domain maps to 254 to 479 (LFLMKKLHPG…PQGYVLWLAN (226 aa)). An N-linked (GlcNAc...) asparagine glycan is attached at asparagine 445.

Expressed in stamen.

This chain is BURP domain-containing protein 4 (BURP4), found in Oryza sativa subsp. japonica (Rice).